The following is a 465-amino-acid chain: Na(+)-translocating NADH-quinone reductase subunit A (465 aa).

It belongs to the NqrA family. Composed of six subunits; NqrA, NqrB, NqrC, NqrD, NqrE and NqrF.

The catalysed reaction is a ubiquinone + n Na(+)(in) + NADH + H(+) = a ubiquinol + n Na(+)(out) + NAD(+). NQR complex catalyzes the reduction of ubiquinone-1 to ubiquinol by two successive reactions, coupled with the transport of Na(+) ions from the cytoplasm to the periplasm. NqrA to NqrE are probably involved in the second step, the conversion of ubisemiquinone to ubiquinol. The chain is Na(+)-translocating NADH-quinone reductase subunit A from Chlamydia muridarum (strain MoPn / Nigg).